A 259-amino-acid chain; its full sequence is Indole-3-glycerol phosphate synthase (259 aa).

The protein belongs to the TrpC family.

It catalyses the reaction 1-(2-carboxyphenylamino)-1-deoxy-D-ribulose 5-phosphate + H(+) = (1S,2R)-1-C-(indol-3-yl)glycerol 3-phosphate + CO2 + H2O. Its pathway is amino-acid biosynthesis; L-tryptophan biosynthesis; L-tryptophan from chorismate: step 4/5. In Dehalococcoides mccartyi (strain ATCC BAA-2100 / JCM 16839 / KCTC 5957 / BAV1), this protein is Indole-3-glycerol phosphate synthase.